The primary structure comprises 75 residues: UPF0352 protein ESA_01049 (75 aa).

It belongs to the UPF0352 family.

The sequence is that of UPF0352 protein ESA_01049 from Cronobacter sakazakii (strain ATCC BAA-894) (Enterobacter sakazakii).